The sequence spans 196 residues: Anthranilate synthase component 2 (196 aa).

The 194-residue stretch at 3–196 (NIVFIDNFDS…IEWALEKNNA (194 aa)) folds into the Glutamine amidotransferase type-1 domain. An L-glutamine-binding site is contributed by 57 to 59 (GPG). Cys84 (nucleophile; for GATase activity) is an active-site residue. L-glutamine-binding positions include Gln88 and 134–135 (SL). Residues His170 and Glu172 each act as for GATase activity in the active site.

In terms of assembly, heterotetramer consisting of two non-identical subunits: a beta subunit (TrpG) and a large alpha subunit (TrpE).

It carries out the reaction chorismate + L-glutamine = anthranilate + pyruvate + L-glutamate + H(+). It functions in the pathway amino-acid biosynthesis; L-tryptophan biosynthesis; L-tryptophan from chorismate: step 1/5. Part of a heterotetrameric complex that catalyzes the two-step biosynthesis of anthranilate, an intermediate in the biosynthesis of L-tryptophan. In the first step, the glutamine-binding beta subunit (TrpG) of anthranilate synthase (AS) provides the glutamine amidotransferase activity which generates ammonia as a substrate that, along with chorismate, is used in the second step, catalyzed by the large alpha subunit of AS (TrpE) to produce anthranilate. In the absence of TrpG, TrpE can synthesize anthranilate directly from chorismate and high concentrations of ammonia. This Vibrio parahaemolyticus serotype O3:K6 (strain RIMD 2210633) protein is Anthranilate synthase component 2 (trpG).